The primary structure comprises 416 residues: Solute carrier family 25 member 46 (416 aa).

Residues 1–13 (MQPRRPDRFDGLE) show a composition bias toward basic and acidic residues. Positions 1–91 (MQPRRPDRFD…GEESSSSSSG (91 aa)) are disordered. Over residues 37–49 (SFSSSGDLSQHWV) the composition is skewed to polar residues. The span at 82-91 (GEESSSSSSG) shows a compositional bias: low complexity. The stretch at 94 to 185 (HLNRFAGFGI…GMLSEFTHLP (92 aa)) is one Solcar 1 repeat. Transmembrane regions (helical) follow at residues 101 to 121 (FGIG…CIVL), 161 to 181 (MGST…LSEF), 197 to 217 (IGGH…FYSA), 256 to 276 (LLPL…HYII), 312 to 332 (FPEL…LYPL), and 381 to 401 (LGFY…AIVL). The Solcar 2 repeat unit spans residues 309 to 414 (EDYFPELIAN…KIIYSSVVQT (106 aa)).

This sequence belongs to the mitochondrial carrier (TC 2.A.29) family.

The protein resides in the mitochondrion outer membrane. Its function is as follows. May play a role in mitochondrial dynamics by controlling mitochondrial membrane fission. This is Solute carrier family 25 member 46 (slc25a46) from Xenopus tropicalis (Western clawed frog).